Consider the following 384-residue polypeptide: S-adenosylmethionine synthase (384 aa).

Residue His15 participates in ATP binding. Mg(2+) is bound at residue Asp17. Glu43 is a binding site for K(+). 2 residues coordinate L-methionine: Glu56 and Gln99. Residues 99–109 (QSSDINQGVDR) are flexible loop. ATP-binding positions include 164–166 (DAK), 230–231 (RF), Asp239, 245–246 (RK), Ala262, and Lys266. L-methionine is bound at residue Asp239. Residue Lys270 coordinates L-methionine.

Belongs to the AdoMet synthase family. In terms of assembly, homotetramer; dimer of dimers. Mg(2+) serves as cofactor. It depends on K(+) as a cofactor.

It is found in the cytoplasm. It carries out the reaction L-methionine + ATP + H2O = S-adenosyl-L-methionine + phosphate + diphosphate. The protein operates within amino-acid biosynthesis; S-adenosyl-L-methionine biosynthesis; S-adenosyl-L-methionine from L-methionine: step 1/1. Functionally, catalyzes the formation of S-adenosylmethionine (AdoMet) from methionine and ATP. The overall synthetic reaction is composed of two sequential steps, AdoMet formation and the subsequent tripolyphosphate hydrolysis which occurs prior to release of AdoMet from the enzyme. This Pasteurella multocida (strain Pm70) protein is S-adenosylmethionine synthase.